A 252-amino-acid chain; its full sequence is Imidazole glycerol phosphate synthase subunit HisF (252 aa).

Catalysis depends on residues aspartate 11 and aspartate 130.

This sequence belongs to the HisA/HisF family. Heterodimer of HisH and HisF.

Its subcellular location is the cytoplasm. It catalyses the reaction 5-[(5-phospho-1-deoxy-D-ribulos-1-ylimino)methylamino]-1-(5-phospho-beta-D-ribosyl)imidazole-4-carboxamide + L-glutamine = D-erythro-1-(imidazol-4-yl)glycerol 3-phosphate + 5-amino-1-(5-phospho-beta-D-ribosyl)imidazole-4-carboxamide + L-glutamate + H(+). It functions in the pathway amino-acid biosynthesis; L-histidine biosynthesis; L-histidine from 5-phospho-alpha-D-ribose 1-diphosphate: step 5/9. In terms of biological role, IGPS catalyzes the conversion of PRFAR and glutamine to IGP, AICAR and glutamate. The HisF subunit catalyzes the cyclization activity that produces IGP and AICAR from PRFAR using the ammonia provided by the HisH subunit. The sequence is that of Imidazole glycerol phosphate synthase subunit HisF from Desulforudis audaxviator (strain MP104C).